The chain runs to 179 residues: Ribosome maturation factor RimM (179 aa).

A PRC barrel domain is found at 100–176 (KEEFHLLELI…FLIINPPNGL (77 aa)).

It belongs to the RimM family. As to quaternary structure, binds ribosomal protein uS19.

It is found in the cytoplasm. Functionally, an accessory protein needed during the final step in the assembly of 30S ribosomal subunit, possibly for assembly of the head region. Essential for efficient processing of 16S rRNA. May be needed both before and after RbfA during the maturation of 16S rRNA. It has affinity for free ribosomal 30S subunits but not for 70S ribosomes. The chain is Ribosome maturation factor RimM from Prochlorococcus marinus (strain MIT 9312).